A 532-amino-acid polypeptide reads, in one-letter code: 2-isopropylmalate synthase (532 aa).

A Pyruvate carboxyltransferase domain is found at 5 to 267; that stretch reads VIIFDTTLRD…HTNINHQEIY (263 aa). 4 residues coordinate Mn(2+): Asp14, His202, His204, and Asn238. A regulatory domain region spans residues 392-532; it reads HLDYFSVQSG…SKQQNSQETV (141 aa). The interval 513–532 is disordered; sequence QQHNNQQQNDSKQQNSQETV.

This sequence belongs to the alpha-IPM synthase/homocitrate synthase family. LeuA type 1 subfamily. In terms of assembly, homodimer. Requires Mn(2+) as cofactor.

Its subcellular location is the cytoplasm. It carries out the reaction 3-methyl-2-oxobutanoate + acetyl-CoA + H2O = (2S)-2-isopropylmalate + CoA + H(+). Its pathway is amino-acid biosynthesis; L-leucine biosynthesis; L-leucine from 3-methyl-2-oxobutanoate: step 1/4. In terms of biological role, catalyzes the condensation of the acetyl group of acetyl-CoA with 3-methyl-2-oxobutanoate (2-ketoisovalerate) to form 3-carboxy-3-hydroxy-4-methylpentanoate (2-isopropylmalate). This chain is 2-isopropylmalate synthase, found in Pectobacterium atrosepticum (strain SCRI 1043 / ATCC BAA-672) (Erwinia carotovora subsp. atroseptica).